A 485-amino-acid polypeptide reads, in one-letter code: Ras-like GTPase YcjX (485 aa).

Residues 33–40 (GLSGAGKT) carry the Walker A motif motif. GTP-binding residues include Ser-35, Gly-36, Gly-38, Lys-39, Thr-40, Ala-41, Trp-110, Ser-113, Thr-114, Arg-115, Lys-355, Asp-357, and His-358. Residues Gly-36, Gly-38, Lys-39, Thr-40, Ala-41, Trp-110, Ser-113, and Thr-114 each contribute to the GDP site. Lys-355, Asp-357, His-358, Ser-395, Ala-396, and Ile-397 together coordinate GDP. A GTP-binding site is contributed by Ile-397.

In terms of assembly, monomer in solution. Requires Mg(2+) as cofactor.

The catalysed reaction is GTP + H2O = GDP + phosphate + H(+). Alternates between an inactive form bound to GDP and an active form bound to GTP. Likely activated by a guanine nucleotide-exchange factor (GEF). Binds GTP and GDP. Has intrinsic GTPase activity. Does not hydrolyze ATP. May act as a transducer of stress responses. The chain is Ras-like GTPase YcjX from Shewanella oneidensis (strain ATCC 700550 / JCM 31522 / CIP 106686 / LMG 19005 / NCIMB 14063 / MR-1).